Here is a 201-residue protein sequence, read N- to C-terminus: Peroxiredoxin 2 (201 aa).

The Thioredoxin domain occupies 3-156; it reads VYLGKRAPDF…ILRSVKALQA (154 aa). Cys44 (cysteine sulfenic acid (-SOH) intermediate) is an active-site residue. Arg119 provides a ligand contact to substrate.

This sequence belongs to the peroxiredoxin family. Prx6 subfamily. In terms of assembly, homodecamer. Pentamer of dimers that assemble into a ring structure.

The protein resides in the cytoplasm. The catalysed reaction is a hydroperoxide + [thioredoxin]-dithiol = an alcohol + [thioredoxin]-disulfide + H2O. In terms of biological role, thiol-specific peroxidase that catalyzes the reduction of hydrogen peroxide and organic hydroperoxides to water and alcohols, respectively. Plays a role in cell protection against oxidative stress by detoxifying peroxides. The polypeptide is Peroxiredoxin 2 (Picrophilus torridus (strain ATCC 700027 / DSM 9790 / JCM 10055 / NBRC 100828 / KAW 2/3)).